A 236-amino-acid chain; its full sequence is Purine nucleoside phosphorylase DeoD-type (236 aa).

A purine D-ribonucleoside is bound at residue H4. Residues G20, R24, R43, and 87–90 (RVGT) each bind phosphate. Residues 179–181 (EME) and 203–204 (SD) contribute to the a purine D-ribonucleoside site. D204 serves as the catalytic Proton donor.

Belongs to the PNP/UDP phosphorylase family. Homohexamer; trimer of homodimers.

The enzyme catalyses a purine D-ribonucleoside + phosphate = a purine nucleobase + alpha-D-ribose 1-phosphate. It catalyses the reaction a purine 2'-deoxy-D-ribonucleoside + phosphate = a purine nucleobase + 2-deoxy-alpha-D-ribose 1-phosphate. Its function is as follows. Catalyzes the reversible phosphorolytic breakdown of the N-glycosidic bond in the beta-(deoxy)ribonucleoside molecules, with the formation of the corresponding free purine bases and pentose-1-phosphate. This chain is Purine nucleoside phosphorylase DeoD-type, found in Streptococcus thermophilus (strain ATCC BAA-491 / LMD-9).